Consider the following 223-residue polypeptide: Endonuclease V (223 aa).

Asp-35 and Asp-103 together coordinate Mg(2+).

Belongs to the endonuclease V family. Mg(2+) serves as cofactor.

The protein localises to the cytoplasm. The catalysed reaction is Endonucleolytic cleavage at apurinic or apyrimidinic sites to products with a 5'-phosphate.. DNA repair enzyme involved in the repair of deaminated bases. Selectively cleaves double-stranded DNA at the second phosphodiester bond 3' to a deoxyinosine leaving behind the intact lesion on the nicked DNA. This chain is Endonuclease V, found in Salmonella agona (strain SL483).